A 418-amino-acid chain; its full sequence is MDIKHYMHTVGRQARAASRRLAGATTAEKNAALLAIAAAIRRESAALVAANQEDLTAARAAGLETAMLDRLTLSAKGVESMAEGVEQVATLADPIGEMTDIKYRPSGIQVGKMRVPLGVIGIIYEARPNVTADAAALCLKSGNAAILRGGSEAIRSNRAIAALVHEGLKAAGLPAESVQVIDTTDRAAVGELITMREFVDVIVPRGGKGLIARLLAESRVPMIQHLDGNCHVYLEAEADPAKALKIVENAKTQRYGTCNTAESLLVDRSVAAMLLPPIAAMLTAKGVEIRGCAETQAIVPNAIAATEEDYYTEYLAPIISVKVVSGIDEAIEHINQYSSHHSEAIITDNHPKAMRFLREVDSASVMINASTRFADGFEYGLGAEIGISTDKIHARGPVGLEGLTSQKWVVLGDGHVRG.

It belongs to the gamma-glutamyl phosphate reductase family.

The protein localises to the cytoplasm. It carries out the reaction L-glutamate 5-semialdehyde + phosphate + NADP(+) = L-glutamyl 5-phosphate + NADPH + H(+). It participates in amino-acid biosynthesis; L-proline biosynthesis; L-glutamate 5-semialdehyde from L-glutamate: step 2/2. Its function is as follows. Catalyzes the NADPH-dependent reduction of L-glutamate 5-phosphate into L-glutamate 5-semialdehyde and phosphate. The product spontaneously undergoes cyclization to form 1-pyrroline-5-carboxylate. In Dechloromonas aromatica (strain RCB), this protein is Gamma-glutamyl phosphate reductase.